The primary structure comprises 509 residues: Lengsin (509 aa).

Residues 1–34 (MNNEEDLLQEDSTRDEGNETEANSMNTLRRTRKK) form a disordered region. The region spanning 83 to 177 (NRLQFVRFEA…VICDTFTVTG (95 aa)) is the GS beta-grasp domain. The GS catalytic domain occupies 184–509 (PRYIAKRQLS…ERNKFLEYFI (326 aa)).

Belongs to the glutamine synthetase family. As to quaternary structure, dodecamer. Interacts with BFSP2 and VIM. In terms of tissue distribution, abundantly expressed in lens.

May act as a component of the cytoskeleton or as a chaperone for the reorganization of intermediate filament proteins during terminal differentiation in the lens. Does not seem to have enzymatic activity. This is Lengsin (LGSN) from Homo sapiens (Human).